The primary structure comprises 99 residues: Integration host factor subunit alpha (99 aa).

Belongs to the bacterial histone-like protein family. In terms of assembly, heterodimer of an alpha and a beta chain.

Its function is as follows. This protein is one of the two subunits of integration host factor, a specific DNA-binding protein that functions in genetic recombination as well as in transcriptional and translational control. This is Integration host factor subunit alpha from Alteromonas mediterranea (strain DSM 17117 / CIP 110805 / LMG 28347 / Deep ecotype).